We begin with the raw amino-acid sequence, 166 residues long: Large ribosomal subunit protein uL10 (166 aa).

This sequence belongs to the universal ribosomal protein uL10 family. In terms of assembly, part of the ribosomal stalk of the 50S ribosomal subunit. The N-terminus interacts with L11 and the large rRNA to form the base of the stalk. The C-terminus forms an elongated spine to which L12 dimers bind in a sequential fashion forming a multimeric L10(L12)X complex.

In terms of biological role, forms part of the ribosomal stalk, playing a central role in the interaction of the ribosome with GTP-bound translation factors. The protein is Large ribosomal subunit protein uL10 of Tropheryma whipplei (strain TW08/27) (Whipple's bacillus).